A 329-amino-acid polypeptide reads, in one-letter code: MSNNRLVILHGNAHPKLSKEIASCLNTEVGNALVSKFANSETQVIINESVRDVDLYIVQPTCNPSVNDYLMELLVMVDGAKRASAHRITAVVPFFGYARQSKKDKSRAPITCKLVANMMEAAGIDRVITMDLHSSQIQGFFNIPVENVYTEPLFVKYIKKKKKTEFLNQEFVIVSPGVGGVKRAKAISDKLESELAIIHRANKEMSLSLSSSFSFDIEETVLVGDVTGKIAIIIDDIADTCKTLKLASKALIKKGAIKVYALVTHGVFSNNAIDIINDSSITELVITDSIPNEHNKEKCPKLKIISIASVLSETMRRCHHGESVTSISK.

Asp131, His133, and Glu146 together coordinate Mg(2+). The tract at residues 227 to 242 (TGKIAIIIDDIADTCK) is binding of phosphoribosylpyrophosphate.

Belongs to the ribose-phosphate pyrophosphokinase family. The cofactor is Mg(2+).

It is found in the cytoplasm. It carries out the reaction D-ribose 5-phosphate + ATP = 5-phospho-alpha-D-ribose 1-diphosphate + AMP + H(+). Its pathway is metabolic intermediate biosynthesis; 5-phospho-alpha-D-ribose 1-diphosphate biosynthesis; 5-phospho-alpha-D-ribose 1-diphosphate from D-ribose 5-phosphate (route I): step 1/1. The chain is Ribose-phosphate pyrophosphokinase B (prsB) from Dictyostelium discoideum (Social amoeba).